A 917-amino-acid polypeptide reads, in one-letter code: MIASHLLAYFFTELNHDQVQKVDQYLYHMRLSDETLLEISKRFRKEMEKGLAATTHPTASVKMLPTFVRSTPDGTEHGEFLALDLGGTNFRVLRVRVTDNGLQKVEMENQIYAIPEDIMQGSGTQLFDHIAGCLANFMDKLQIKDKKLPLGFTFSFPCIQTKLDESFLVSWTKGFKSRGVEGRDVVTLIRKAIQRRGDFDIDIVAMVNDTVATMMTCGYDDQNCEIGLIVGMGSNACYMEEMRYIDTVEGDEGRMCINMEWGAFGDDGTLDDIRTEFDQEIDMGSLNPGQQLFEKMISGMYMGELVRLILVKMAKEELLFRGKLSPELLTTGRFETKDVSEIEGEKDGIQKAREVLVRLGMDPTQEDCVATHRICQIVSTRSASLCAATLAAVLQRIKENKGEERLRSTIGVDGSVYKKHPHFAKRLQKTVRRLVPNCDIRFLCSEDGSGKGAAMVTAVAYRLAYQHRARLKTLEPLKLSREQLLEVKRRMKVEMERGLSKETHASAPVKMLPTYVCATPDGTEKGDFLALDLGGTNFRVLLVRVRNGKRRGVEMHNKIYSIPQDIMHGTGDELFDHIVQCIADFLEYMGMKGVSLPLGFTFSFPCQQNRLDESILLKWTKGFKASGCEGEDVVTLLKEAIHRREEFDLDVVAVVNDTVGTMMTCGYEDPHCEVGLIVGTGSNACYMEEMRNVELVEGEEGRMCVNTEWGAFGDNGCLDDFCTEFDVAVDELSLNPGKQRFEKMMSGMYLGEIVRNILIDFTKRGLLFRGRISERLKTRGIFETKFLSQIESDCLALQQVRAILQHLGLESTCDDSIIVKEVCTVVAQRAAQLCGAGMAAVVDKIRENRGLDTLKVTVGVDGTLYKLHPHFAKVMRETVKDLAPKCDVSFLESEDGSGKGAALITAVACRIREAGQR.

The residue at position 1 (methionine 1) is an N-acetylmethionine. Residues 1–16 (MIASHLLAYFFTELNH) are mitochondrial-binding peptide (MBP). 2 consecutive Hexokinase domains span residues 16-458 (HDQV…MVTA) and 464-906 (AYQH…LITA). Residues arginine 30 and 84 to 89 (DLGGTN) contribute to the ATP site. The hexokinase small subdomain 1 stretch occupies residues 73–207 (DGTEHGEFLA…DFDIDIVAMV (135 aa)). 84–88 (DLGGT) serves as a coordination point for D-glucose 6-phosphate. D-glucose contacts are provided by residues 155-156 (SF), 172-173 (TK), 208-209 (ND), asparagine 235, glutamate 260, and 291-294 (QLFE). Residues 208 to 447 (NDTVATMMTC…CDIRFLCSED (240 aa)) form a hexokinase large subdomain 1 region. Residue aspartate 209 participates in D-glucose 6-phosphate binding. Position 413–415 (413–415 (DGS)) interacts with D-glucose 6-phosphate. 425–426 (KR) contacts ATP. D-glucose 6-phosphate-binding positions include serine 449 and 532-536 (DLGGT). Residues 521 to 655 (DGTEKGDFLA…EFDLDVVAVV (135 aa)) form a hexokinase small subdomain 2 region. Position 532 to 537 (532 to 537 (DLGGTN)) interacts with ATP. Residues 603-604 (SF), 620-621 (TK), and 656-657 (ND) each bind D-glucose. The interval 656-895 (NDTVGTMMTC…CDVSFLESED (240 aa)) is hexokinase large subdomain 2. D-glucose 6-phosphate contacts are provided by aspartate 657 and threonine 680. Threonine 680 is an ATP binding site. D-glucose is bound by residues 682-683 (SN), glutamate 708, and 739-742 (QRFE). ATP is bound by residues 747 to 748 (GM), 784 to 788 (TKFLS), and 863 to 867 (TLYKL). D-glucose 6-phosphate contacts are provided by residues 861 to 863 (DGT) and serine 897.

It belongs to the hexokinase family. As to quaternary structure, monomer. Interacts with TIGAR; the interaction increases hexokinase activity in a hypoxia- and HIF1A-dependent manner.

Its subcellular location is the mitochondrion outer membrane. It localises to the cytoplasm. The protein resides in the cytosol. The catalysed reaction is a D-hexose + ATP = a D-hexose 6-phosphate + ADP + H(+). The enzyme catalyses D-fructose + ATP = D-fructose 6-phosphate + ADP + H(+). It carries out the reaction D-glucose + ATP = D-glucose 6-phosphate + ADP + H(+). It participates in carbohydrate metabolism; hexose metabolism. Its pathway is carbohydrate degradation; glycolysis; D-glyceraldehyde 3-phosphate and glycerone phosphate from D-glucose: step 1/4. Its activity is regulated as follows. Hexokinase activity is specifically inhibited by 2,6-disubstituted glucosamines. Catalyzes the phosphorylation of hexose, such as D-glucose and D-fructose, to hexose 6-phosphate (D-glucose 6-phosphate and D-fructose 6-phosphate, respectively). Mediates the initial step of glycolysis by catalyzing phosphorylation of D-glucose to D-glucose 6-phosphate. Plays a key role in maintaining the integrity of the outer mitochondrial membrane by preventing the release of apoptogenic molecules from the intermembrane space and subsequent apoptosis. In Equus zebra (Mountain zebra), this protein is Hexokinase-2.